Consider the following 320-residue polypeptide: RNA-binding protein Musashi homolog 1 (320 aa).

Over residues 1–14 (MTTTVSTGATAVAT) the composition is skewed to low complexity. The interval 1 to 48 (MTTTVSTGATAVATLRETSPPVDGHEEARLNADSDDGSHGSQDPGKMF) is disordered. A Phosphothreonine modification is found at Thr18. Phosphoserine is present on residues Ser19 and Ser34. Positions 23–38 (DGHEEARLNADSDDGS) are enriched in basic and acidic residues. RRM domains lie at 45–124 (GKMF…FPKR) and 134–211 (KKVF…KAQP). Required for binding to target mRNAs stretches follow at residues 88–93 (FGFITF) and 177–182 (FGFVTF).

It belongs to the Musashi family. Expressed in the gut and in AVA, AFD, RMD, RMED, RMEV, RMER and RMEL neurons (at protein level). In the tail expressed in neurons and all the ray sensilla. Expressed in male specific C1-C4 neurons.

The protein localises to the cytoplasm. Its subcellular location is the perikaryon. Its function is as follows. RNA binding protein that regulates the expression of target mRNAs at the translation level. Binds RNA containing the 5'-[GA]U(1-3)AGU-3' motif located in the 3' UTR of the target mRNA. Binds to the mRNA of three Arp2/3 complex components arx-1, arx-2 and arx-3 and negatively regulates their translation during association learning. Plays a role in time-dependent memory loss and the retention of conditioned behavior over time, probably through negative regulation of the Arp2/3 actin cytoskeleton branching complex and regulation of synapse size. Required for two aspects of male mating behavior: turning around the hermaphrodite head or tail and vulva location. The protein is RNA-binding protein Musashi homolog 1 of Caenorhabditis elegans.